Reading from the N-terminus, the 433-residue chain is Adenylosuccinate synthetase (433 aa).

GTP contacts are provided by residues 12–18 (GDEGKGK) and 40–42 (GHT). Residue Asp-13 is the Proton acceptor of the active site. Asp-13 and Gly-40 together coordinate Mg(2+). IMP is bound by residues 13–16 (DEGK), 38–41 (NAGH), Thr-130, Arg-144, Gln-225, Thr-240, and Arg-304. His-41 functions as the Proton donor in the catalytic mechanism. Residue 300–306 (ATTGRPR) participates in substrate binding. Residues Arg-306, 332-334 (KLD), and 414-416 (SIG) each bind GTP.

It belongs to the adenylosuccinate synthetase family. As to quaternary structure, homodimer. The cofactor is Mg(2+).

The protein localises to the cytoplasm. It catalyses the reaction IMP + L-aspartate + GTP = N(6)-(1,2-dicarboxyethyl)-AMP + GDP + phosphate + 2 H(+). Its pathway is purine metabolism; AMP biosynthesis via de novo pathway; AMP from IMP: step 1/2. Its function is as follows. Plays an important role in the de novo pathway of purine nucleotide biosynthesis. Catalyzes the first committed step in the biosynthesis of AMP from IMP. In Geobacter sulfurreducens (strain ATCC 51573 / DSM 12127 / PCA), this protein is Adenylosuccinate synthetase.